The sequence spans 497 residues: Glycerol kinase (497 aa).

Residue Thr-11 participates in ADP binding. 3 residues coordinate ATP: Thr-11, Ser-12, and Ser-13. Thr-11 contacts sn-glycerol 3-phosphate. An ADP-binding site is contributed by Arg-15. The sn-glycerol 3-phosphate site is built by Arg-81, Glu-82, Tyr-133, and Asp-242. Glycerol contacts are provided by Arg-81, Glu-82, Tyr-133, Asp-242, and Gln-243. ADP-binding residues include Thr-264 and Gly-307. ATP is bound by residues Thr-264, Gly-307, Gln-311, and Gly-412. ADP is bound by residues Gly-412 and Asn-416.

The protein belongs to the FGGY kinase family.

The enzyme catalyses glycerol + ATP = sn-glycerol 3-phosphate + ADP + H(+). Its pathway is polyol metabolism; glycerol degradation via glycerol kinase pathway; sn-glycerol 3-phosphate from glycerol: step 1/1. Inhibited by fructose 1,6-bisphosphate (FBP). In terms of biological role, key enzyme in the regulation of glycerol uptake and metabolism. Catalyzes the phosphorylation of glycerol to yield sn-glycerol 3-phosphate. This Polaromonas naphthalenivorans (strain CJ2) protein is Glycerol kinase.